The following is a 755-amino-acid chain: Polyribonucleotide nucleotidyltransferase (755 aa).

Residues Asp-545 and Asp-551 each contribute to the Mg(2+) site. Residues Pro-611–Ile-670 enclose the KH domain. Residues Gly-682 to Val-751 enclose the S1 motif domain.

Belongs to the polyribonucleotide nucleotidyltransferase family. The cofactor is Mg(2+).

It localises to the cytoplasm. The enzyme catalyses RNA(n+1) + phosphate = RNA(n) + a ribonucleoside 5'-diphosphate. In terms of biological role, involved in mRNA degradation. Catalyzes the phosphorolysis of single-stranded polyribonucleotides processively in the 3'- to 5'-direction. In Corynebacterium diphtheriae (strain ATCC 700971 / NCTC 13129 / Biotype gravis), this protein is Polyribonucleotide nucleotidyltransferase.